A 292-amino-acid chain; its full sequence is Homoserine kinase (292 aa).

Residue 84–94 (PLARGMGSSSA) coordinates ATP.

It belongs to the GHMP kinase family. Homoserine kinase subfamily.

The protein localises to the cytoplasm. It catalyses the reaction L-homoserine + ATP = O-phospho-L-homoserine + ADP + H(+). Its pathway is amino-acid biosynthesis; L-threonine biosynthesis; L-threonine from L-aspartate: step 4/5. In terms of biological role, catalyzes the ATP-dependent phosphorylation of L-homoserine to L-homoserine phosphate. The sequence is that of Homoserine kinase from Campylobacter lari (strain RM2100 / D67 / ATCC BAA-1060).